We begin with the raw amino-acid sequence, 334 residues long: Phosphoribosylformylglycinamidine cyclo-ligase (334 aa).

This sequence belongs to the AIR synthase family.

Its subcellular location is the cytoplasm. The catalysed reaction is 2-formamido-N(1)-(5-O-phospho-beta-D-ribosyl)acetamidine + ATP = 5-amino-1-(5-phospho-beta-D-ribosyl)imidazole + ADP + phosphate + H(+). It functions in the pathway purine metabolism; IMP biosynthesis via de novo pathway; 5-amino-1-(5-phospho-D-ribosyl)imidazole from N(2)-formyl-N(1)-(5-phospho-D-ribosyl)glycinamide: step 2/2. The polypeptide is Phosphoribosylformylglycinamidine cyclo-ligase (Pyrococcus furiosus (strain ATCC 43587 / DSM 3638 / JCM 8422 / Vc1)).